The sequence spans 459 residues: Ribosomal protein uS12 methylthiotransferase RimO (459 aa).

Residues 11 to 126 (PKVGMVSLGC…VMQAVHSHLP (116 aa)) form the MTTase N-terminal domain. Residues Cys20, Cys56, Cys85, Cys157, Cys161, and Cys164 each contribute to the [4Fe-4S] cluster site. A Radical SAM core domain is found at 143–388 (LTPRHYAYLK…MEVAEEVSAA (246 aa)). One can recognise a TRAM domain in the interval 391–459 (ARKVGKTLKV…ADGHDLWGEV (69 aa)).

It belongs to the methylthiotransferase family. RimO subfamily. [4Fe-4S] cluster is required as a cofactor.

It localises to the cytoplasm. The catalysed reaction is L-aspartate(89)-[ribosomal protein uS12]-hydrogen + (sulfur carrier)-SH + AH2 + 2 S-adenosyl-L-methionine = 3-methylsulfanyl-L-aspartate(89)-[ribosomal protein uS12]-hydrogen + (sulfur carrier)-H + 5'-deoxyadenosine + L-methionine + A + S-adenosyl-L-homocysteine + 2 H(+). Its function is as follows. Catalyzes the methylthiolation of an aspartic acid residue of ribosomal protein uS12. In Burkholderia pseudomallei (strain K96243), this protein is Ribosomal protein uS12 methylthiotransferase RimO.